Consider the following 84-residue polypeptide: Large ribosomal subunit protein bL27 (84 aa).

This sequence belongs to the bacterial ribosomal protein bL27 family.

The chain is Large ribosomal subunit protein bL27 from Campylobacter jejuni subsp. jejuni serotype O:6 (strain 81116 / NCTC 11828).